The sequence spans 283 residues: ATP phosphoribosyltransferase (283 aa).

The protein belongs to the ATP phosphoribosyltransferase family. Long subfamily. It depends on Mg(2+) as a cofactor.

It is found in the cytoplasm. It catalyses the reaction 1-(5-phospho-beta-D-ribosyl)-ATP + diphosphate = 5-phospho-alpha-D-ribose 1-diphosphate + ATP. The protein operates within amino-acid biosynthesis; L-histidine biosynthesis; L-histidine from 5-phospho-alpha-D-ribose 1-diphosphate: step 1/9. Feedback inhibited by histidine. Functionally, catalyzes the condensation of ATP and 5-phosphoribose 1-diphosphate to form N'-(5'-phosphoribosyl)-ATP (PR-ATP). Has a crucial role in the pathway because the rate of histidine biosynthesis seems to be controlled primarily by regulation of HisG enzymatic activity. This is ATP phosphoribosyltransferase from Salinibacter ruber (strain DSM 13855 / M31).